The following is a 455-amino-acid chain: Virion host shutoff protein (455 aa).

The protein belongs to the herpesviridae VHS protein family.

It is found in the virion. In terms of biological role, minor structural protein that acts as an endoribonuclease during lytic infection. Degrades host mRNAs in the cytoplasm by cutting them at preferred sites, including some in regions of translation initiation. This chain is Virion host shutoff protein (17), found in Homo sapiens (Human).